A 488-amino-acid chain; its full sequence is G-patch domain and KOW motifs-containing protein (488 aa).

A compositionally biased stretch (pro residues) spans 1-11; sequence MAGRESPPPSA. A disordered region spans residues 1–20; the sequence is MAGRESPPPSAPSMAPISFG. Position 2 is an N-acetylalanine (alanine 2). Serine 25 is modified (phosphoserine; by PKA). Residues 72 to 97 are disordered; sequence IQNGSRRQPLSKNPKPSSETSTVLMS. The segment covering 73 to 95 has biased composition (polar residues); it reads QNGSRRQPLSKNPKPSSETSTVL. Position 115 is a phosphoserine (serine 115). The region spanning 164–210 is the G-patch domain; it reads VEAYGLAMLRGMGWKPGKGIGNTFSQVVKPRVNSIRPKGLGLGANRM. 2 disordered regions span residues 216–241 and 295–367; these read ASVGSHHPPRPDGDRENDKEGQPQGL and QEFD…PRNK. The segment covering 224–236 has biased composition (basic and acidic residues); it reads PRPDGDRENDKEG. The KOW 1 domain maps to 231–258; that stretch reads ENDKEGQPQGLMHGRAVVVLSGPYRGLY. Positions 307–331 are enriched in polar residues; that stretch reads VSQTSTEQQNRATGTASSLKAAQNQ. 2 stretches are compositionally biased toward basic and acidic residues: residues 332–341 and 349–363; these read EDSKRRQKGS and PDRQDGPVPKTEKAA. One can recognise a KOW 2 domain in the interval 401 to 428; that stretch reads PDTCVCRTDEGRVLEDVREDMLETLIPK. Serine 485 bears the Phosphoserine mark.

Belongs to the MOS2 family. In terms of assembly, component of the minor spliceosome, which splices U12-type introns. Interacts with PRKX, PRKACB and DHX16. In terms of processing, phosphorylation regulates its ability to bind RNA.

It localises to the nucleus. Functionally, RNA-binding protein involved in pre-mRNA splicing. As a component of the minor spliceosome, involved in the splicing of U12-type introns in pre-mRNAs. In Mus musculus (Mouse), this protein is G-patch domain and KOW motifs-containing protein (Gpkow).